The sequence spans 319 residues: Translocon-associated protein subunit alpha (319 aa).

The N-terminal stretch at Met-1–Leu-21 is a signal peptide. The Lumenal segment spans residues Arg-22 to Thr-208. Residues Leu-35–Ser-76 are compositionally biased toward acidic residues. Residues Leu-35–Ala-84 form a disordered region. N-linked (GlcNAc...) asparagine glycosylation is found at Asn-137 and Asn-192. The helical transmembrane segment at Ile-209–Leu-229 threads the bilayer. At Leu-230 to Ile-319 the chain is on the cytoplasmic side. A Phosphoserine modification is found at Ser-248. Thr-261 is subject to Phosphothreonine.

Belongs to the TRAP-alpha family. Heterotetramer of TRAP-alpha, TRAP-beta, TRAP-delta and TRAP-gamma. Interacts with palmitoylated calnexin (CALX), the interaction is required for efficient folding of glycosylated proteins.

The protein resides in the endoplasmic reticulum membrane. Functionally, TRAP proteins are part of a complex whose function is to bind calcium to the ER membrane and thereby regulate the retention of ER resident proteins. May be involved in the recycling of the translocation apparatus after completion of the translocation process or may function as a membrane-bound chaperone facilitating folding of translocated proteins. In Rattus norvegicus (Rat), this protein is Translocon-associated protein subunit alpha (Ssr1).